Here is a 325-residue protein sequence, read N- to C-terminus: Zinc finger C2HC domain-containing protein 1A (325 aa).

A C2HC/C3H-type 1 zinc finger spans residues 15–44 (ELLPCKICGRTFFPVALKKHGPICQKTATK). Residues Cys-19, Cys-22, His-34, and Cys-38 each coordinate Zn(2+). The tract at residues 43–83 (TKKRKTFDSSRQRAEGTDIPTVKPLKPRPEPPKKPSNWRRK) is disordered. Basic and acidic residues predominate over residues 48-58 (TFDSSRQRAEG). Residues 118–147 (DYIQCPYCQRRFNENAADRHINFCKEQAAR) form a C2HC/C3H-type 2 zinc finger. Zn(2+) is bound by residues Cys-122, Cys-125, His-137, and Cys-141. Residues 150–260 (NKGKFSTDTK…NPAPGVLTNK (111 aa)) are disordered. Composition is skewed to low complexity over residues 177 to 188 (SNSPGTASSGSS) and 197 to 216 (GKTVVGVPSGKVSSSSSSLG). Ser-223 carries the post-translational modification Phosphoserine. At Thr-244 the chain carries Phosphothreonine. Position 292 is a phosphoserine (Ser-292).

It belongs to the ZC2HC1 family. The cofactor is Zn(2+).

This is Zinc finger C2HC domain-containing protein 1A (ZC2HC1A) from Homo sapiens (Human).